The sequence spans 132 residues: uncharacterized protein (132 aa).

Transmembrane regions (helical) follow at residues 12-32 (VIGFVVLFCVLELVFYLKKLY) and 37-57 (LTLAVFGIFSLLFFLLYIPVL).

It is found in the cell membrane. This is an uncharacterized protein from Methanocaldococcus jannaschii (strain ATCC 43067 / DSM 2661 / JAL-1 / JCM 10045 / NBRC 100440) (Methanococcus jannaschii).